A 274-amino-acid polypeptide reads, in one-letter code: Penicillin-insensitive murein endopeptidase (274 aa).

An N-terminal signal peptide occupies residues 1-19; that stretch reads MKKTAIALLAWFVSSASLA. 3 disulfide bridges follow: Cys44–Cys265, Cys187–Cys235, and Cys216–Cys223. Zn(2+) contacts are provided by His110, His113, Asp120, Asp147, and His150. Positions 225-274 are disordered; that stretch reads DQPLPPPGDGCGAELQSWFEPPKPGTTKPEKKTPPPLPPSCQALLDEHVL.

It belongs to the peptidase M74 family. In terms of assembly, dimer. Requires Zn(2+) as cofactor.

The protein localises to the periplasm. In terms of biological role, murein endopeptidase that cleaves the D-alanyl-meso-2,6-diamino-pimelyl amide bond that connects peptidoglycan strands. Likely plays a role in the removal of murein from the sacculus. In Salmonella paratyphi A (strain ATCC 9150 / SARB42), this protein is Penicillin-insensitive murein endopeptidase.